The sequence spans 255 residues: Accessory gland-specific peptide 26Aa (255 aa).

The N-terminal stretch at 1 to 18 (MNQILLCSQILLLLFAVA) is a signal peptide. The disordered stretch occupies residues 86-110 (PINNSKSRKNSSTLPSQILTDKPNQ). Polar residues predominate over residues 87 to 110 (INNSKSRKNSSTLPSQILTDKPNQ). 3 N-linked (GlcNAc...) asparagine glycosylation sites follow: asparagine 88, asparagine 95, and asparagine 136. Disordered stretches follow at residues 177–197 (NAQNARKPTKSCKKRPSKDIA) and 235–255 (NNPATDVPTGKSPSEGNPSTT). Over residues 183–192 (KPTKSCKKRP) the composition is skewed to basic residues. Over residues 245–255 (KSPSEGNPSTT) the composition is skewed to polar residues.

Post-translationally, it undergoes several cleavages as it is secreted and it is further processed in the recipient female. In terms of tissue distribution, main cells of the accessory glands of males.

It localises to the secreted. The protein resides in the extracellular space. This protein is transferred from male to female's hemolymph during mating, affecting egglaying and behavior after mating. The sequence is that of Accessory gland-specific peptide 26Aa (Acp26Aa) from Drosophila simulans (Fruit fly).